A 172-amino-acid polypeptide reads, in one-letter code: UPF0102 protein AM1_3954 (172 aa).

It belongs to the UPF0102 family.

This Acaryochloris marina (strain MBIC 11017) protein is UPF0102 protein AM1_3954.